The primary structure comprises 141 residues: Ribosome-binding factor A (141 aa).

A disordered region spans residues 120-141 (DEALRAQSAGARPAGDEDPYKP).

Belongs to the RbfA family. As to quaternary structure, monomer. Binds 30S ribosomal subunits, but not 50S ribosomal subunits or 70S ribosomes.

Its subcellular location is the cytoplasm. Functionally, one of several proteins that assist in the late maturation steps of the functional core of the 30S ribosomal subunit. Associates with free 30S ribosomal subunits (but not with 30S subunits that are part of 70S ribosomes or polysomes). Required for efficient processing of 16S rRNA. May interact with the 5'-terminal helix region of 16S rRNA. This Corynebacterium jeikeium (strain K411) protein is Ribosome-binding factor A.